The primary structure comprises 307 residues: N-acetylmuramic acid 6-phosphate etherase (307 aa).

Positions 59–222 constitute an SIS domain; it reads TADRLRQGGR…STGVMVKLGK (164 aa). Catalysis depends on Glu-87, which acts as the Proton donor. The active site involves Glu-118.

This sequence belongs to the GCKR-like family. MurNAc-6-P etherase subfamily. In terms of assembly, homodimer.

The enzyme catalyses N-acetyl-D-muramate 6-phosphate + H2O = N-acetyl-D-glucosamine 6-phosphate + (R)-lactate. The protein operates within amino-sugar metabolism; N-acetylmuramate degradation. Functionally, specifically catalyzes the cleavage of the D-lactyl ether substituent of MurNAc 6-phosphate, producing GlcNAc 6-phosphate and D-lactate. This Trichormus variabilis (strain ATCC 29413 / PCC 7937) (Anabaena variabilis) protein is N-acetylmuramic acid 6-phosphate etherase.